Here is a 163-residue protein sequence, read N- to C-terminus: MSKKRRQRGSRTHGGGSHKNRRGAGHRGGRGNAGRDKHEFHNHEPLGKSGFKRPQKTRRDVETVNLRELDEDIAVLVEDGIAEESDDGYVVDARDVVEDGYEADVVKVLGAGTVYNELEIVADAFSESAEQALEVADGEAVLSERGEELEAEKDSTDEEDEES.

The span at methionine 1–glycine 29 shows a compositional bias: basic residues. 2 disordered regions span residues methionine 1–arginine 59 and valine 135–serine 163. Basic and acidic residues-rich tracts occupy residues alanine 33–leucine 46 and leucine 142–aspartate 154.

Belongs to the universal ribosomal protein uL15 family. As to quaternary structure, part of the 50S ribosomal subunit.

Functionally, binds to the 23S rRNA. This chain is Large ribosomal subunit protein uL15, found in Natronomonas pharaonis (strain ATCC 35678 / DSM 2160 / CIP 103997 / JCM 8858 / NBRC 14720 / NCIMB 2260 / Gabara) (Halobacterium pharaonis).